A 104-amino-acid chain; its full sequence is 11 kDa late embryogenesis abundant protein (104 aa).

Over residues 1–24 (MQSGKNAAASAKETAANVAASAKA) the composition is skewed to low complexity. The disordered stretch occupies residues 1-104 (MQSGKNAAAS…TGHRTGTGGI (104 aa)). Positions 25-74 (GMEKTKASLQEKGEKMTAHDPMQKEMAREKKEERKHEAEYEKQAAKEHNA) are enriched in basic and acidic residues. Over residues 75–89 (AQKQTTGIGTGTHSY) the composition is skewed to polar residues.

Belongs to the LEA type 1 family. In terms of tissue distribution, maximally expressed in dry seeds. Also present in mid-maturation embryos.

Its function is as follows. LEA proteins are late embryonic proteins abundant in higher plant seed embryos. They may play an essential role in seed survival and in controlling water exchanges during seed desiccation and imbibition. This Helianthus annuus (Common sunflower) protein is 11 kDa late embryogenesis abundant protein.